Here is a 407-residue protein sequence, read N- to C-terminus: Ribosomal protein uL3-like (407 aa).

Basic residues predominate over residues 1 to 31 (MSHRKFSAPRHGHLGFLPHKRSHRHRGKVKT). Disordered regions lie at residues 1–35 (MSHR…WPRD) and 387–407 (AFMG…SGDL).

This sequence belongs to the universal ribosomal protein uL3 family. In terms of assembly, component of the large ribosomal subunit in striated muscle cells.

Its function is as follows. Heart- and skeletal muscle-specific component of the ribosome, which regulates muscle function. Component of the large ribosomal subunit in striated muscle cells: replaces the RPL3 paralog in the ribosome in these cells. The ribosome is a large ribonucleoprotein complex responsible for the synthesis of proteins in the cell. Inhibits myotube growth and muscle function. This Homo sapiens (Human) protein is Ribosomal protein uL3-like.